The following is a 75-amino-acid chain: MYB-like transcription factor ETC3 (75 aa).

The interval M1–S20 is disordered. The Myb-like domain occupies S34–W71.

As to expression, expressed in leaf epidermal cells, stomate guard cells in leaves, cotyledons and hypocotyls, inflorescences, developing seeds and siliques.

It localises to the nucleus. MYB-type transcription factor involved in epidermal cell fate specification. Acts as a negative regulator of trichome development, including endoreplication, by mediating lateral inhibition. Promotes the formation of hair developing cells in H position in root epidermis, probably by inhibiting non-hair cell formation. May have pleiotropic effects on flowering development and epidermal cell size through the regulation of endoreduplication. This Arabidopsis thaliana (Mouse-ear cress) protein is MYB-like transcription factor ETC3 (ETC3).